The following is a 328-amino-acid chain: BURP domain-containing protein 11 (328 aa).

The 245-residue stretch at 74–318 (FFFRDALRPG…TKLSIVWVPR (245 aa)) folds into the BURP domain.

As to expression, expressed in roots.

This is BURP domain-containing protein 11 (BURP11) from Oryza sativa subsp. japonica (Rice).